The sequence spans 97 residues: Putative septation protein SpoVG (97 aa).

It belongs to the SpoVG family.

In terms of biological role, could be involved in septation. In Borrelia garinii subsp. bavariensis (strain ATCC BAA-2496 / DSM 23469 / PBi) (Borreliella bavariensis), this protein is Putative septation protein SpoVG.